A 285-amino-acid chain; its full sequence is MNKELESIYQNIANQSELGQTANYDSYYNPKRLYPIPRAPKRQEINLDPNSTTFYGFDCWNHYEVSWLNSKGKPVVAMAVISYDCHSPCIIESKSLKLYFNSLNNSTFPDVETVVQTISKDLSYCIGSEVAVNVYPLSDIPNQTIYAAFDGVCLDKLDIECSVYHVMPDFLSTSSELVEEVLYSDLLKSNCLVTNQPDWGSVQIIYKGKKINHEGLLKYLISFRNHNEFHEQCIERIFADIMRFCQPESLTVYGRYTRRGGLDINPIRSTEPCAFDGQNIRLIRQ.

91–93 (IES) contributes to the substrate binding site. 93–94 (SK) contacts NADPH. Cys-191 serves as the catalytic Thioimide intermediate. Residue Asp-198 is the Proton donor of the active site. 230–231 (HE) contributes to the substrate binding site. Position 259-260 (259-260 (RG)) interacts with NADPH.

This sequence belongs to the GTP cyclohydrolase I family. QueF type 2 subfamily. As to quaternary structure, homodimer.

Its subcellular location is the cytoplasm. The enzyme catalyses 7-aminomethyl-7-carbaguanine + 2 NADP(+) = 7-cyano-7-deazaguanine + 2 NADPH + 3 H(+). Its pathway is tRNA modification; tRNA-queuosine biosynthesis. In terms of biological role, catalyzes the NADPH-dependent reduction of 7-cyano-7-deazaguanine (preQ0) to 7-aminomethyl-7-deazaguanine (preQ1). The protein is NADPH-dependent 7-cyano-7-deazaguanine reductase of Legionella pneumophila (strain Corby).